A 206-amino-acid polypeptide reads, in one-letter code: NADH-quinone oxidoreductase subunit C (206 aa).

It belongs to the complex I 30 kDa subunit family. NDH-1 is composed of 14 different subunits. Subunits NuoB, C, D, E, F, and G constitute the peripheral sector of the complex.

It localises to the cell inner membrane. The enzyme catalyses a quinone + NADH + 5 H(+)(in) = a quinol + NAD(+) + 4 H(+)(out). In terms of biological role, NDH-1 shuttles electrons from NADH, via FMN and iron-sulfur (Fe-S) centers, to quinones in the respiratory chain. The immediate electron acceptor for the enzyme in this species is believed to be ubiquinone. Couples the redox reaction to proton translocation (for every two electrons transferred, four hydrogen ions are translocated across the cytoplasmic membrane), and thus conserves the redox energy in a proton gradient. This chain is NADH-quinone oxidoreductase subunit C, found in Bordetella avium (strain 197N).